The sequence spans 256 residues: Thiazole synthase (256 aa).

The Schiff-base intermediate with DXP role is filled by Lys96. Residues Gly157, 183 to 184, and 205 to 206 contribute to the 1-deoxy-D-xylulose 5-phosphate site; these read AG and NT.

It belongs to the ThiG family. In terms of assembly, homotetramer. Forms heterodimers with either ThiH or ThiS.

The protein localises to the cytoplasm. It catalyses the reaction [ThiS sulfur-carrier protein]-C-terminal-Gly-aminoethanethioate + 2-iminoacetate + 1-deoxy-D-xylulose 5-phosphate = [ThiS sulfur-carrier protein]-C-terminal Gly-Gly + 2-[(2R,5Z)-2-carboxy-4-methylthiazol-5(2H)-ylidene]ethyl phosphate + 2 H2O + H(+). Its pathway is cofactor biosynthesis; thiamine diphosphate biosynthesis. In terms of biological role, catalyzes the rearrangement of 1-deoxy-D-xylulose 5-phosphate (DXP) to produce the thiazole phosphate moiety of thiamine. Sulfur is provided by the thiocarboxylate moiety of the carrier protein ThiS. In vitro, sulfur can be provided by H(2)S. The sequence is that of Thiazole synthase from Bacillus cytotoxicus (strain DSM 22905 / CIP 110041 / 391-98 / NVH 391-98).